A 179-amino-acid polypeptide reads, in one-letter code: UPF0227 protein Shewmr4_1727 (179 aa).

The protein belongs to the UPF0227 family.

The protein is UPF0227 protein Shewmr4_1727 of Shewanella sp. (strain MR-4).